The following is a 498-amino-acid chain: Probable cytosol aminopeptidase (498 aa).

Mn(2+) contacts are provided by K264 and D269. K276 is a catalytic residue. 3 residues coordinate Mn(2+): D287, D346, and E348. R350 is an active-site residue.

Belongs to the peptidase M17 family. It depends on Mn(2+) as a cofactor.

It localises to the cytoplasm. The catalysed reaction is Release of an N-terminal amino acid, Xaa-|-Yaa-, in which Xaa is preferably Leu, but may be other amino acids including Pro although not Arg or Lys, and Yaa may be Pro. Amino acid amides and methyl esters are also readily hydrolyzed, but rates on arylamides are exceedingly low.. It carries out the reaction Release of an N-terminal amino acid, preferentially leucine, but not glutamic or aspartic acids.. Functionally, presumably involved in the processing and regular turnover of intracellular proteins. Catalyzes the removal of unsubstituted N-terminal amino acids from various peptides. The sequence is that of Probable cytosol aminopeptidase from Brucella anthropi (strain ATCC 49188 / DSM 6882 / CCUG 24695 / JCM 21032 / LMG 3331 / NBRC 15819 / NCTC 12168 / Alc 37) (Ochrobactrum anthropi).